A 333-amino-acid chain; its full sequence is Glyceraldehyde-3-phosphate dehydrogenase (333 aa).

NAD(+)-binding positions include 12-13 (RI), D36, R80, and S120. D-glyceraldehyde 3-phosphate contacts are provided by residues 150 to 152 (SCT), T181, R196, 209 to 210 (TG), and R232. C151 serves as the catalytic Nucleophile. N314 is a binding site for NAD(+).

The protein belongs to the glyceraldehyde-3-phosphate dehydrogenase family. Homotetramer.

It is found in the cytoplasm. The catalysed reaction is D-glyceraldehyde 3-phosphate + phosphate + NAD(+) = (2R)-3-phospho-glyceroyl phosphate + NADH + H(+). The protein operates within carbohydrate degradation; glycolysis; pyruvate from D-glyceraldehyde 3-phosphate: step 1/5. Functionally, catalyzes the oxidative phosphorylation of glyceraldehyde 3-phosphate (G3P) to 1,3-bisphosphoglycerate (BPG) using the cofactor NAD. The first reaction step involves the formation of a hemiacetal intermediate between G3P and a cysteine residue, and this hemiacetal intermediate is then oxidized to a thioester, with concomitant reduction of NAD to NADH. The reduced NADH is then exchanged with the second NAD, and the thioester is attacked by a nucleophilic inorganic phosphate to produce BPG. The chain is Glyceraldehyde-3-phosphate dehydrogenase (gapB) from Cereibacter sphaeroides (Rhodobacter sphaeroides).